We begin with the raw amino-acid sequence, 168 residues long: Mediator of RNA polymerase II transcription subunit 31 (168 aa).

Positions 113–159 (EGEDQDVEESEEETVENEQKESEDEEDVVIVEKPEDEQEEQAEEAAE) are enriched in acidic residues. Residues 113–168 (EGEDQDVEESEEETVENEQKESEDEEDVVIVEKPEDEQEEQAEEAAEPTDTSLLNT) form a disordered region.

The protein belongs to the Mediator complex subunit 31 family. Component of the Mediator complex.

The protein localises to the nucleus. Its function is as follows. Component of the Mediator complex, a coactivator involved in the regulated transcription of nearly all RNA polymerase II-dependent genes. Mediator functions as a bridge to convey information from gene-specific regulatory proteins to the basal RNA polymerase II transcription machinery. Mediator is recruited to promoters by direct interactions with regulatory proteins and serves as a scaffold for the assembly of a functional preinitiation complex with RNA polymerase II and the general transcription factors. This Caenorhabditis briggsae protein is Mediator of RNA polymerase II transcription subunit 31 (mdt-31).